The chain runs to 302 residues: MSTKFNVKTFQGMILALQEYWANQGCTIVQPFDMEVGAGTSHPMTALRALGPEPMAFAYVQPSRRPTDGRYGENPNRLQHYYQFQVVIKPSPDNIQELYLGSLEMLGFDPTQNDIRFVEDNWENPTLGAWGLGWEVWLNGMEVTQFTYFQQVGGLECKPVTGEVTYGLERLAMYIQGVDSVYDLVWSDGPLGKTTYGDVFHQNEVEQSTYNFEHANTDFLFYCFDQYEKEAQELLALEKPLPLPAYERILKAAHSFNLLDARKAISVTERQRYILRIRALTKGVAEAYYASREALGFPGCKK.

Belongs to the class-II aminoacyl-tRNA synthetase family. In terms of assembly, tetramer of two alpha and two beta subunits.

The protein localises to the cytoplasm. The catalysed reaction is tRNA(Gly) + glycine + ATP = glycyl-tRNA(Gly) + AMP + diphosphate. The chain is Glycine--tRNA ligase alpha subunit from Haemophilus influenzae (strain 86-028NP).